The sequence spans 155 residues: Arginine repressor (155 aa).

The protein belongs to the ArgR family.

Its subcellular location is the cytoplasm. The protein operates within amino-acid biosynthesis; L-arginine biosynthesis [regulation]. Functionally, regulates arginine biosynthesis genes. This chain is Arginine repressor, found in Histophilus somni (strain 2336) (Haemophilus somnus).